The following is a 331-amino-acid chain: 5,10-methylenetetrahydromethanopterin reductase (331 aa).

This sequence belongs to the mer family.

It localises to the cytoplasm. The catalysed reaction is 5-methyl-5,6,7,8-tetrahydromethanopterin + oxidized coenzyme F420-(gamma-L-Glu)(n) + H(+) = 5,10-methylenetetrahydromethanopterin + reduced coenzyme F420-(gamma-L-Glu)(n). It participates in one-carbon metabolism; methanogenesis from CO(2); methyl-coenzyme M from 5,10-methylene-5,6,7,8-tetrahydromethanopterin: step 1/2. Functionally, catalyzes the reversible reduction of methylene-H(4)MPT to methyl-H(4)MPT. The protein is 5,10-methylenetetrahydromethanopterin reductase of Methanocaldococcus jannaschii (strain ATCC 43067 / DSM 2661 / JAL-1 / JCM 10045 / NBRC 100440) (Methanococcus jannaschii).